Reading from the N-terminus, the 864-residue chain is DNA mismatch repair protein MutS (864 aa).

607-614 (GPNMGGKS) serves as a coordination point for ATP.

This sequence belongs to the DNA mismatch repair MutS family.

Functionally, this protein is involved in the repair of mismatches in DNA. It is possible that it carries out the mismatch recognition step. This protein has a weak ATPase activity. This Neisseria gonorrhoeae (strain ATCC 700825 / FA 1090) protein is DNA mismatch repair protein MutS.